Here is a 612-residue protein sequence, read N- to C-terminus: Glucoamylase (612 aa).

The signal sequence occupies residues 1 to 19 (MVSFSSCLRALALGSSVLA). Residues 20-25 (VQPVLR) constitute a propeptide that is removed on maturation. N-linked (GlcNAc...) asparagine glycosylation occurs at asparagine 39. Tryptophan 146 contributes to the substrate binding site. The active-site Proton acceptor is the aspartate 202. Residue glutamate 205 is the Proton donor of the active site. Cystine bridges form between cysteine 236-cysteine 239, cysteine 248-cysteine 475, and cysteine 288-cysteine 296. In terms of domain architecture, CBM20 spans 506 to 612 (CQVPTTVSVT…KSAVQSDVWR (107 aa)).

The protein belongs to the glycosyl hydrolase 15 family.

The enzyme catalyses Hydrolysis of terminal (1-&gt;4)-linked alpha-D-glucose residues successively from non-reducing ends of the chains with release of beta-D-glucose.. In Aspergillus oryzae (strain ATCC 42149 / RIB 40) (Yellow koji mold), this protein is Glucoamylase (glaA).